Consider the following 355-residue polypeptide: C-C chemokine receptor type 8 (355 aa).

Over 1–35 (MDYTLDLSVTTVTDYYYPDIFSSPCDAELIQTNGK) the chain is Extracellular. A helical transmembrane segment spans residues 36–63 (LLLAVFYCLLFVFSLLGNSLVILVLVVC). Over 64–73 (KKLRSITDVY) the chain is Cytoplasmic. A helical transmembrane segment spans residues 74-93 (LLNLALSDLLFVFSFPFQTY). At 94-107 (YLLDQWVFGTVMCK) the chain is on the extracellular side. Residues cysteine 106 and cysteine 183 are joined by a disulfide bond. Residues 108 to 129 (VVSGFYYIGFYSSMFFITLMSV) traverse the membrane as a helical segment. Topologically, residues 130–146 (DRYLAVVHAVYALKVRT) are cytoplasmic. Residues 147–171 (IRMGTTLCLAVWLTAIMATIPLLVF) traverse the membrane as a helical segment. Topologically, residues 172 to 202 (YQVASEDGVLQCYSFYNQQTLKWKIFTNFKM) are extracellular. A helical transmembrane segment spans residues 203-222 (NILGLLIPFTIFMFCYIKIL). The Cytoplasmic portion of the chain corresponds to 223–238 (HQLKRCQNHNKTKAIR). Residues 239 to 263 (LVLIVVIASLLFWVPFNVVLFLTSL) form a helical membrane-spanning segment. Residues 264–280 (HSMHILDGCSISQQLTY) lie on the Extracellular side of the membrane. Residues 281 to 304 (ATHVTEIISFTHCCVNPVIYAFVG) traverse the membrane as a helical segment. Residues 305–355 (EKFKKHLSEIFQKSCSQIFNYLGRQMPRESCEKSSSCQQHSSRSSSVDYIL) lie on the Cytoplasmic side of the membrane.

Belongs to the G-protein coupled receptor 1 family.

The protein localises to the cell membrane. Receptor for the chemokine CCL1/SCYA1/I-309. May regulate monocyte chemotaxis and thymic cell line apoptosis. Alternative coreceptor with CD4 for HIV-1 infection. This is C-C chemokine receptor type 8 (CCR8) from Homo sapiens (Human).